Here is a 394-residue protein sequence, read N- to C-terminus: Protein-glutamate methylesterase/protein-glutamine glutaminase 2 (394 aa).

The Response regulatory domain maps to 4 to 121; the sequence is KVLVVDDSSF…ARNRDEAISL (118 aa). Position 55 is a 4-aspartylphosphate (Asp-55). The CheB-type methylesterase domain occupies 202–394; that stretch reads SGKKYQLMAI…AERILVEVGR (193 aa). Residues Ser-214, His-241, and Asp-337 contribute to the active site.

It belongs to the CheB family. Post-translationally, phosphorylated by CheA. Phosphorylation of the N-terminal regulatory domain activates the methylesterase activity.

It is found in the cytoplasm. It carries out the reaction [protein]-L-glutamate 5-O-methyl ester + H2O = L-glutamyl-[protein] + methanol + H(+). The enzyme catalyses L-glutaminyl-[protein] + H2O = L-glutamyl-[protein] + NH4(+). In terms of biological role, involved in chemotaxis. Part of a chemotaxis signal transduction system that modulates chemotaxis in response to various stimuli. Catalyzes the demethylation of specific methylglutamate residues introduced into the chemoreceptors (methyl-accepting chemotaxis proteins or MCP) by CheR. Also mediates the irreversible deamidation of specific glutamine residues to glutamic acid. This is Protein-glutamate methylesterase/protein-glutamine glutaminase 2 from Photobacterium profundum (strain SS9).